The primary structure comprises 746 residues: GTPase-activating protein GYP7 (746 aa).

Phosphoserine is present on residues Ser-265 and Ser-339. A Rab-GAP TBC domain is found at 385 to 633; it reads LENDSLRGKV…HIWENFWTFY (249 aa). Residues 470-505 form a disordered region; sequence TIDGLPPPPQQLPANENNSTSPESANDESDDADDGV. Polar residues predominate over residues 481–491; the sequence is LPANENNSTSP.

The protein localises to the cytoplasm. GTPase-activating protein (GAP) that most effectively accelerates the intrinsic GTPase activity of Ypt/Rab-type GTPase YPT7 involved in vacuole docking and fusion. It is also active, but to a lesser extent, on YPT31, YPT32, YPT1, YPT6 and SEC4. Provides a catalytic arginine (arginine finger) in trans to accelerate the GTP hydrolysis rate of the substrate GTPase. In Saccharomyces cerevisiae (strain ATCC 204508 / S288c) (Baker's yeast), this protein is GTPase-activating protein GYP7 (GYP7).